The chain runs to 184 residues: dCTP deaminase (184 aa).

DCTP is bound by residues 97 to 102 and D113; that span reads RSTFAR. The active-site Proton donor/acceptor is the E123. DCTP contacts are provided by Y155 and Q162.

Belongs to the dCTP deaminase family. In terms of assembly, homotrimer.

The enzyme catalyses dCTP + H2O + H(+) = dUTP + NH4(+). The protein operates within pyrimidine metabolism; dUMP biosynthesis; dUMP from dCTP (dUTP route): step 1/2. Its function is as follows. Catalyzes the deamination of dCTP to dUTP. The polypeptide is dCTP deaminase (Saccharolobus solfataricus (strain ATCC 35092 / DSM 1617 / JCM 11322 / P2) (Sulfolobus solfataricus)).